Consider the following 173-residue polypeptide: Crossover junction endodeoxyribonuclease RuvC (173 aa).

Active-site residues include Asp-8, Glu-67, and Asp-139. Residues Asp-8, Glu-67, and Asp-139 each contribute to the Mg(2+) site.

The protein belongs to the RuvC family. In terms of assembly, homodimer which binds Holliday junction (HJ) DNA. The HJ becomes 2-fold symmetrical on binding to RuvC with unstacked arms; it has a different conformation from HJ DNA in complex with RuvA. In the full resolvosome a probable DNA-RuvA(4)-RuvB(12)-RuvC(2) complex forms which resolves the HJ. Mg(2+) is required as a cofactor.

The protein localises to the cytoplasm. It catalyses the reaction Endonucleolytic cleavage at a junction such as a reciprocal single-stranded crossover between two homologous DNA duplexes (Holliday junction).. Functionally, the RuvA-RuvB-RuvC complex processes Holliday junction (HJ) DNA during genetic recombination and DNA repair. Endonuclease that resolves HJ intermediates. Cleaves cruciform DNA by making single-stranded nicks across the HJ at symmetrical positions within the homologous arms, yielding a 5'-phosphate and a 3'-hydroxyl group; requires a central core of homology in the junction. The consensus cleavage sequence is 5'-(A/T)TT(C/G)-3'. Cleavage occurs on the 3'-side of the TT dinucleotide at the point of strand exchange. HJ branch migration catalyzed by RuvA-RuvB allows RuvC to scan DNA until it finds its consensus sequence, where it cleaves and resolves the cruciform DNA. The chain is Crossover junction endodeoxyribonuclease RuvC from Salmonella paratyphi C (strain RKS4594).